We begin with the raw amino-acid sequence, 72 residues long: Alpha-elapitoxin-Dpp2a (72 aa).

Disulfide bonds link C3–C21, C14–C42, C27–C31, C46–C57, and C58–C63.

Belongs to the three-finger toxin family. Long-chain subfamily. Type II alpha-neurotoxin sub-subfamily. As to expression, expressed by the venom gland.

The protein resides in the secreted. In terms of biological role, binds with high affinity to muscular (alpha-1/CHRNA1) and neuronal (alpha-7/CHRNA7) nicotinic acetylcholine receptor (nAChR) and inhibits acetylcholine from binding to the receptor, thereby impairing neuromuscular and neuronal transmission. This Dendroaspis polylepis polylepis (Black mamba) protein is Alpha-elapitoxin-Dpp2a.